The following is a 137-amino-acid chain: MPNPAELAAHHWGFAAFLLGVVGLLAFMLGVSALLGSKAFGRSKNEPFESGIVPTGGARLRLSAKFYLVAMLFVIFDVEALFLFAWSVSVRESGWAGLIEATIFIAILLAGLVYLWRIGALDWAPESRRKRQAKLKQ.

Transmembrane regions (helical) follow at residues Phe-14 to Leu-34, Phe-66 to Trp-86, and Trp-95 to Leu-115.

The protein belongs to the complex I subunit 3 family. NDH-1 is composed of 13 different subunits. Subunits NuoA, H, J, K, L, M, N constitute the membrane sector of the complex.

Its subcellular location is the cell inner membrane. It carries out the reaction a quinone + NADH + 5 H(+)(in) = a quinol + NAD(+) + 4 H(+)(out). Its function is as follows. NDH-1 shuttles electrons from NADH, via FMN and iron-sulfur (Fe-S) centers, to quinones in the respiratory chain. The immediate electron acceptor for the enzyme in this species is believed to be ubiquinone. Couples the redox reaction to proton translocation (for every two electrons transferred, four hydrogen ions are translocated across the cytoplasmic membrane), and thus conserves the redox energy in a proton gradient. This is NADH-quinone oxidoreductase subunit A 1 from Pseudomonas paraeruginosa (strain DSM 24068 / PA7) (Pseudomonas aeruginosa (strain PA7)).